The primary structure comprises 296 residues: Galectin-3 (296 aa).

Positions 1–11 (MADSFSLNDAL) are enriched in polar residues. The tract at residues 1-150 (MADSFSLNDA…PSAPGAYPAA (150 aa)) is disordered. N-acetylalanine is present on A2. 2 positions are modified to phosphoserine; by CK1: S6 and S12. Composition is skewed to low complexity over residues 12–31 (SGSGNPNPQGWPGPWGNQPA) and 38–47 (GASYPGAYPG). Repeat copies occupy residues 36-44 (YPGASYPGA), 45-53 (YPGQAPPGG), 54-62 (YPGQAPPGG), 63-71 (YPGQAPPGG), 72-80 (YPGQAPPGG), 81-89 (YPGQAPPGG), 90-98 (YPGQAPPGG), and 99-107 (YPGQAPPGT). Positions 36–143 (YPGASYPGAY…AYPPPGQPSA (108 aa)) are 12 X 9 AA tandem repeats of Y-P-G-X(3)-P-G-[GAT]. Positions 48–120 (QAPPGGYPGQ…PTAPAYPGPT (73 aa)) are enriched in pro residues. One copy of the 9; approximate repeat lies at 108–115 (YPGPTAPA). Residues 116 to 124 (YPGPTAPGT) form repeat 10. Low complexity predominate over residues 121–133 (APGTQPGQPSGPG). The 11; approximate repeat unit spans residues 125 to 134 (QPGQPSGPGA). The stretch at 135-143 (YPPPGQPSA) is one 12; approximate repeat. In terms of domain architecture, Galectin spans 164–294 (YDLPLPGGVK…DIDLTSASYA (131 aa)). Residue 227–233 (WGKEERQ) coordinates a beta-D-galactoside. A Nuclear export signal motif is present at residues 272-287 (KNLPEISKLGISGDID).

As to quaternary structure, probably forms homo- or heterodimers. Interacts with DMBT1. Interacts with CD6 and ALCAM. Forms a complex with the ITGA3, ITGB1 and CSPG4. Interacts with LGALS3BP, LYPD3, ZFTRAF1 and UACA. Interacts with TRIM16; this interaction mediates autophagy of damage endomembranes. Interacts with cargo receptor TMED10; the interaction mediates the translocation from the cytoplasm into the ERGIC (endoplasmic reticulum-Golgi intermediate compartment) and thereby secretion. Interacts with and inhibits by binding NCR3/NKp30. Post-translationally, the degree of phosphorylation is higher in the cytoplasmic form than in the nuclear form. In protein isolated from a canine kidney cell line, 90% of the phosphate was on Ser-6 and 10% was on Ser-12.

It localises to the cytoplasm. The protein resides in the nucleus. Its subcellular location is the secreted. Its function is as follows. Galactose-specific lectin which binds IgE. May mediate with the alpha-3, beta-1 integrin the stimulation by CSPG4 of endothelial cells migration. Together with DMBT1, required for terminal differentiation of columnar epithelial cells during early embryogenesis. In the nucleus: acts as a pre-mRNA splicing factor. Involved in acute inflammatory responses including neutrophil activation and adhesion, chemoattraction of monocytes macrophages, opsonization of apoptotic neutrophils, and activation of mast cells. Together with TRIM16, coordinates the recognition of membrane damage with mobilization of the core autophagy regulators ATG16L1 and BECN1 in response to damaged endomembranes. When secreted, interacts with NK cell-activating receptor NCR3/NKp30 acting as an inhibitory ligand which antagonizes NK cell attack. The chain is Galectin-3 (LGALS3) from Canis lupus familiaris (Dog).